Here is a 186-residue protein sequence, read N- to C-terminus: Elongation factor P (186 aa).

Belongs to the elongation factor P family.

Its subcellular location is the cytoplasm. It functions in the pathway protein biosynthesis; polypeptide chain elongation. Its function is as follows. Involved in peptide bond synthesis. Stimulates efficient translation and peptide-bond synthesis on native or reconstituted 70S ribosomes in vitro. Probably functions indirectly by altering the affinity of the ribosome for aminoacyl-tRNA, thus increasing their reactivity as acceptors for peptidyl transferase. The polypeptide is Elongation factor P (Cupriavidus metallidurans (strain ATCC 43123 / DSM 2839 / NBRC 102507 / CH34) (Ralstonia metallidurans)).